Here is a 160-residue protein sequence, read N- to C-terminus: UPF0178 protein PLES_56411 (160 aa).

Belongs to the UPF0178 family.

The protein is UPF0178 protein PLES_56411 of Pseudomonas aeruginosa (strain LESB58).